Here is a 218-residue protein sequence, read N- to C-terminus: Guanylate kinase (218 aa).

The region spanning 14–193 (GVMLVLSSPS…AFASVRAIVS (180 aa)) is the Guanylate kinase-like domain. 21-28 (SPSGAGKS) serves as a coordination point for ATP.

It belongs to the guanylate kinase family.

It localises to the cytoplasm. The enzyme catalyses GMP + ATP = GDP + ADP. Essential for recycling GMP and indirectly, cGMP. This is Guanylate kinase from Chelativorans sp. (strain BNC1).